A 534-amino-acid polypeptide reads, in one-letter code: Putative ammonium transporter 1 (534 aa).

11 helical membrane passes run 31–51, 69–89, 115–135, 139–159, 184–204, 223–243, 263–283, 291–311, 318–338, 346–366, and 401–421; these read SFFL…FAYL, LLDS…LAYG, FFFQ…AVAE, FITY…VLTH, FAGS…AAWI, ILGH…FGFL, ALAM…YLGV, WTLL…CAGC, ACIW…KLMI, LDAF…SSII, and ICAL…FWIL.

Belongs to the ammonia transporter channel (TC 1.A.11.2) family.

It localises to the membrane. In terms of biological role, involved in the uptake of ammonia. The protein is Putative ammonium transporter 1 (amt-1) of Caenorhabditis elegans.